We begin with the raw amino-acid sequence, 512 residues long: Glutathione-binding protein GsiB (512 aa).

Residues 1–26 (MTQFITHKWLAALGLASSIAAFPALA) form the signal peptide.

It belongs to the bacterial solute-binding protein 5 family. In terms of assembly, the complex is composed of two ATP-binding proteins (GsiA), two transmembrane proteins (GsiC and GsiD) and a solute-binding protein (GsiB).

Its subcellular location is the periplasm. Part of the ABC transporter complex GsiABCD involved in glutathione import. Binds glutathione. In Salmonella typhi, this protein is Glutathione-binding protein GsiB.